The sequence spans 311 residues: Olfactory receptor 5P3 (311 aa).

Topologically, residues Met-1 to Ala-25 are extracellular. Asn-5 is a glycosylation site (N-linked (GlcNAc...) asparagine). A helical transmembrane segment spans residues Ile-26–Ile-46. Topologically, residues Val-47–His-54 are cytoplasmic. The helical transmembrane segment at Leu-55 to Ser-75 threads the bilayer. The Extracellular segment spans residues Ser-76 to Ala-99. A disulfide bridge connects residues Cys-97 and Cys-189. A helical transmembrane segment spans residues Gln-100–Tyr-120. Residues Asp-121–Gly-139 lie on the Cytoplasmic side of the membrane. Residues Val-140–Ile-160 form a helical membrane-spanning segment. Residues Gly-161–Glu-196 lie on the Extracellular side of the membrane. Residues Ile-197 to Ser-217 form a helical membrane-spanning segment. The Cytoplasmic portion of the chain corresponds to Tyr-218–Ala-237. The helical transmembrane segment at Phe-238–Ile-258 threads the bilayer. Topologically, residues Tyr-259–Asn-271 are extracellular. A helical membrane pass occupies residues Lys-272 to Leu-292. At Arg-293–Ser-311 the chain is on the cytoplasmic side.

It belongs to the G-protein coupled receptor 1 family. Expressed in the tongue.

The protein localises to the cell membrane. Functionally, odorant receptor (Potential). May be involved in taste perception. This chain is Olfactory receptor 5P3 (OR5P3), found in Homo sapiens (Human).